A 402-amino-acid chain; its full sequence is Tyrosine--tRNA ligase (402 aa).

Positions 48–57 (PSRPDLHLGH) match the 'HIGH' region motif. The 'KMSKS' region signature appears at 232 to 236 (KMSKS). An ATP-binding site is contributed by lysine 235. In terms of domain architecture, S4 RNA-binding spans 339 to 402 (MPIIDLLTLL…KRKFFKIRSK (64 aa)).

The protein belongs to the class-I aminoacyl-tRNA synthetase family. TyrS type 2 subfamily. As to quaternary structure, homodimer.

The protein resides in the cytoplasm. The enzyme catalyses tRNA(Tyr) + L-tyrosine + ATP = L-tyrosyl-tRNA(Tyr) + AMP + diphosphate + H(+). In terms of biological role, catalyzes the attachment of tyrosine to tRNA(Tyr) in a two-step reaction: tyrosine is first activated by ATP to form Tyr-AMP and then transferred to the acceptor end of tRNA(Tyr). The protein is Tyrosine--tRNA ligase of Chlorobium chlorochromatii (strain CaD3).